Reading from the N-terminus, the 201-residue chain is Dermatopontin (201 aa).

Positions 1 to 18 (MDLTLLWVLLPLVTVAWG) are cleaved as a signal peptide. Gln19 is subject to Pyrrolidone carboxylic acid. Tyr23 carries the sulfotyrosine modification. A run of 4 repeats spans residues 26–79 (SYHQ…ACMP), 70–75 (DRQWNY), 80–135 (TPQS…CCRY), and 125–130 (DREWQF). The segment at 26 to 135 (SYHQYHDYSD…REWQFYCCRY (110 aa)) is 2 X 53-55 AA tandem repeats. Intrachain disulfides connect Cys50-Cys77, Cys90-Cys132, Cys106-Cys133, Cys139-Cys196, and Cys143-Cys189. The interval 70–186 (DRQWNYACMP…AVERDRQWKF (117 aa)) is 3 X 6 AA tandem repeats of D-R-[EQ]-W-[NQK]-[FY]. Tyr162, Tyr164, Tyr166, and Tyr167 each carry sulfotyrosine. Residues 181–186 (DRQWKF) form a 2-3 repeat. Tyr194 is modified (sulfotyrosine).

The protein belongs to the dermatopontin family. As to quaternary structure, interacts with TGFB1, DCN and collagen. Sulfated on tyrosine residue(s). As to expression, expressed in skeletal muscle, heart, pancreas, skin and cultured fibroblasts.

It is found in the secreted. Its subcellular location is the extracellular space. It localises to the extracellular matrix. Its function is as follows. Seems to mediate adhesion by cell surface integrin binding. May serve as a communication link between the dermal fibroblast cell surface and its extracellular matrix environment. Enhances TGFB1 activity. Inhibits cell proliferation. Accelerates collagen fibril formation, and stabilizes collagen fibrils against low-temperature dissociation. This Bos taurus (Bovine) protein is Dermatopontin (DPT).